We begin with the raw amino-acid sequence, 136 residues long: Small ribosomal subunit protein uS8c (136 aa).

It belongs to the universal ribosomal protein uS8 family. As to quaternary structure, part of the 30S ribosomal subunit.

It localises to the plastid. The protein resides in the chloroplast. In terms of biological role, one of the primary rRNA binding proteins, it binds directly to 16S rRNA central domain where it helps coordinate assembly of the platform of the 30S subunit. The polypeptide is Small ribosomal subunit protein uS8c (rps8) (Tetradesmus obliquus (Green alga)).